The chain runs to 443 residues: Zinc finger protein 713 (443 aa).

The segment covering 1–10 (MPSQNAVFSQ) has biased composition (polar residues). Disordered regions lie at residues 1–23 (MPSQ…NDGS) and 99–118 (DTHP…TSQN). The KRAB domain maps to 32–102 (LTFQDVAVDF…ERDSLLDTHP (71 aa)). Residues 99–112 (DTHPDGENRPEIKK) are compositionally biased toward basic and acidic residues. Residues 255–280 (HTAEKPSECGKAFSHTSSLSQPQMLL) form a C2H2-type 1; degenerate zinc finger. 5 consecutive C2H2-type zinc fingers follow at residues 286–308 (YKCD…QRIH), 314–336 (FICN…LRIH), 342–364 (YKCN…HRLH), 370–392 (YECG…ERTH), and 398–420 (YKCN…RKIH).

This sequence belongs to the krueppel C2H2-type zinc-finger protein family. As to expression, expressed in fetal and adult brain.

The protein resides in the nucleus. Its function is as follows. May be involved in transcriptional regulation. The chain is Zinc finger protein 713 from Homo sapiens (Human).